The chain runs to 130 residues: Protein NrdI (130 aa).

It belongs to the NrdI family.

In terms of biological role, probably involved in ribonucleotide reductase function. This chain is Protein NrdI, found in Bacillus velezensis (strain DSM 23117 / BGSC 10A6 / LMG 26770 / FZB42) (Bacillus amyloliquefaciens subsp. plantarum).